The following is a 430-amino-acid chain: 2-deoxy-scyllo-inosose synthase (430 aa).

NAD(+) contacts are provided by residues aspartate 42, 73-76 (EVHK), 105-109 (GVTGN), 129-130 (TT), 140-142 (SLK), and 151-152 (KN). Lysine 142 is an active-site residue. Position 184 (glutamate 184) interacts with Co(2+). Residue glutamate 244 is part of the active site. Residues histidine 247 and histidine 263 each coordinate Co(2+). A disordered region spans residues 371 to 430 (RGGAGGGAAEPAAARTGPVPDGPEAAVPATPGPVPAGPAAAAPLPSGPAPTAPAAAGPVP). Low complexity predominate over residues 379 to 399 (AEPAAARTGPVPDGPEAAVPA).

It belongs to the sugar phosphate cyclases superfamily. DOI synthase family. The cofactor is NAD(+). It depends on Co(2+) as a cofactor.

The catalysed reaction is D-glucose 6-phosphate = 2-deoxy-L-scyllo-inosose + phosphate. The protein operates within metabolic intermediate biosynthesis; 2-deoxystreptamine biosynthesis; 2-deoxystreptamine from D-glucose 6-phosphate: step 1/4. It functions in the pathway antibiotic biosynthesis; neomycin biosynthesis. Its function is as follows. Catalyzes the intramolecular carbocycle formation from D-glucose-6-phosphate to 2-deoxy-scyllo-inosose (DOI). The sequence is that of 2-deoxy-scyllo-inosose synthase (neoC) from Streptomyces fradiae (Streptomyces roseoflavus).